A 300-amino-acid polypeptide reads, in one-letter code: uncharacterized protein (300 aa).

Helical transmembrane passes span 4-24, 31-51, 68-88, 95-115, 120-140, 146-166, 177-197, 214-234, 242-262, and 272-292; these read IIII…WIAM, IPPF…LIIL, FQIF…LYGG, ISSI…HFYL, NFIQ…VLLI, CFFQ…HAVI, VSVI…LSII, ILAV…SYFY, FYAS…EIYI, and LWFI…INFF. 2 consecutive EamA domains span residues 15-139 and 161-287; these read ITWG…FVLL and LSHA…LTLI.

It belongs to the EamA transporter family.

The protein resides in the cell membrane. This is an uncharacterized protein from Buchnera aphidicola subsp. Schizaphis graminum (strain Sg).